A 669-amino-acid chain; its full sequence is MWTLVGRGWGCARALAPRATGAALLVAPGPRSAPTLGAAPESWATDRLYSSAEFKEKLDMSRFPVENIRNFSIVAHVDHGKSTLADRLLELTGTIDKTKNNKQVLDKLQVERERGITVKAQTASLFYNCEGKQYLLNLIDTPGHVDFSYEVSRSLSACQGVLLVVDANEGIQAQTVANFFLAFEAQLSVIPVINKIDLKNADPERVENQIEKVFDIPSDECIKISAKLGTNVESVLQAIIERIPPPKVHRKNPLRALVFDSTFDQYRGVIANVALFDGVVSKGDKIVSAHTQKTYEVNEVGVLNPNEQPTHKLYAGQVGYLIAGMKDVTEAQIGDTLCLHKQPVEPLPGFKSAKPMVFAGMYPLDQSEYNNLKSAIEKLTLNDSSVTVHRDSSLALGAGWRLGFLGLLHMEVFNQRLEQEYNASVILTTPTVPYKAVLSSSKLIKEHREKEITIINPAQFPDKSKVTEYLEPVVLGTIITPDEYTGKIMMLCEARRAVQKNMIFIDQNRVMLKYLFPLNEIVVDFYDSLKSLSSGYASFDYEDAGYQTAELVKMDILLNGNTVEELVTVVHKDKAHSIGKAICERLKDSLPRQLFEIAIQAAIGSKIIARETVKAYRKNVLAKCYGGDITRKMKLLKRQAEGKKKLRKIGNVEVPKDAFIKVLKTQSSK.

The N-terminal 49 residues, 1–49, are a transit peptide targeting the mitochondrion; sequence MWTLVGRGWGCARALAPRATGAALLVAPGPRSAPTLGAAPESWATDRLY. Residues 66-247 enclose the tr-type G domain; that stretch reads ENIRNFSIVA…AIIERIPPPK (182 aa). GTP contacts are provided by residues 75-82, 140-144, and 194-197; these read AHVDHGKS, DTPGH, and NKID.

Belongs to the TRAFAC class translation factor GTPase superfamily. Classic translation factor GTPase family. LepA subfamily.

It is found in the mitochondrion inner membrane. It carries out the reaction GTP + H2O = GDP + phosphate + H(+). Functionally, promotes mitochondrial protein synthesis. May act as a fidelity factor of the translation reaction, by catalyzing a one-codon backward translocation of tRNAs on improperly translocated ribosomes. Binds to mitochondrial ribosomes in a GTP-dependent manner. This is Translation factor GUF1, mitochondrial from Homo sapiens (Human).